A 157-amino-acid polypeptide reads, in one-letter code: Arginine repressor (157 aa).

The protein belongs to the ArgR family.

The protein resides in the cytoplasm. The protein operates within amino-acid biosynthesis; L-arginine biosynthesis [regulation]. Regulates arginine biosynthesis genes. This Deinococcus radiodurans (strain ATCC 13939 / DSM 20539 / JCM 16871 / CCUG 27074 / LMG 4051 / NBRC 15346 / NCIMB 9279 / VKM B-1422 / R1) protein is Arginine repressor.